The sequence spans 165 residues: Small ribosomal subunit protein uS5 (165 aa).

Residues 13–76 form the S5 DRBM domain; that stretch reads LEEKVLVVNR…DAARKNLVSI (64 aa).

This sequence belongs to the universal ribosomal protein uS5 family. Part of the 30S ribosomal subunit. Contacts proteins S4 and S8.

In terms of biological role, with S4 and S12 plays an important role in translational accuracy. Functionally, located at the back of the 30S subunit body where it stabilizes the conformation of the head with respect to the body. The chain is Small ribosomal subunit protein uS5 from Chlamydia muridarum (strain MoPn / Nigg).